The following is a 398-amino-acid chain: Energy-coupling factor transporter ATP-binding protein EcfA2 (398 aa).

One can recognise an ABC transporter domain in the interval 5-240; sequence IELKDLEYAY…KELVRRARLK (236 aa). 38–45 lines the ATP pocket; the sequence is GSNGAGKS.

The protein belongs to the ABC transporter superfamily. Energy-coupling factor EcfA family. Forms a stable energy-coupling factor (ECF) transporter complex composed of 2 membrane-embedded substrate-binding proteins (S component), 2 ATP-binding proteins (A component) and 2 transmembrane proteins (T component).

The protein resides in the cell membrane. ATP-binding (A) component of a common energy-coupling factor (ECF) ABC-transporter complex. Unlike classic ABC transporters this ECF transporter provides the energy necessary to transport a number of different substrates. This chain is Energy-coupling factor transporter ATP-binding protein EcfA2, found in Methanospirillum hungatei JF-1 (strain ATCC 27890 / DSM 864 / NBRC 100397 / JF-1).